The following is a 368-amino-acid chain: Putative agmatine deiminase (368 aa).

Cys-359 (amidino-cysteine intermediate) is an active-site residue.

Belongs to the agmatine deiminase family.

The catalysed reaction is agmatine + H2O = N-carbamoylputrescine + NH4(+). In Pectobacterium atrosepticum (strain SCRI 1043 / ATCC BAA-672) (Erwinia carotovora subsp. atroseptica), this protein is Putative agmatine deiminase.